We begin with the raw amino-acid sequence, 396 residues long: uncharacterized protein (396 aa).

This sequence belongs to the NAD(P)-dependent epimerase/dehydratase family. The cofactor is NAD(+). Requires NADP(+) as cofactor.

Its function is as follows. Putative nucleotide sugar epimerase/dehydrogenase. This is an uncharacterized protein from Sinorhizobium fredii (strain NBRC 101917 / NGR234).